Here is a 181-residue protein sequence, read N- to C-terminus: Adenine phosphoribosyltransferase (181 aa).

Belongs to the purine/pyrimidine phosphoribosyltransferase family. In terms of assembly, homodimer.

The protein resides in the cytoplasm. It carries out the reaction AMP + diphosphate = 5-phospho-alpha-D-ribose 1-diphosphate + adenine. Its pathway is purine metabolism; AMP biosynthesis via salvage pathway; AMP from adenine: step 1/1. In terms of biological role, catalyzes a salvage reaction resulting in the formation of AMP, that is energically less costly than de novo synthesis. In Shewanella woodyi (strain ATCC 51908 / MS32), this protein is Adenine phosphoribosyltransferase.